The following is a 325-amino-acid chain: DNA repair and recombination protein RadA (325 aa).

107–114 (GEFGSGKT) is a binding site for ATP.

This sequence belongs to the eukaryotic RecA-like protein family.

Involved in DNA repair and in homologous recombination. Binds and assemble on single-stranded DNA to form a nucleoprotein filament. Hydrolyzes ATP in a ssDNA-dependent manner and promotes DNA strand exchange between homologous DNA molecules. The chain is DNA repair and recombination protein RadA from Methanosarcina barkeri (strain Fusaro / DSM 804).